The sequence spans 380 residues: Cytochrome b (380 aa).

Transmembrane regions (helical) follow at residues Phe34–Met54, Trp78–Ile99, Trp114–Leu134, and Phe179–Thr199. Heme b is bound by residues His84 and His98. 2 residues coordinate heme b: His183 and His197. A ubiquinone is bound at residue His202. Helical transmembrane passes span Leu227–Ser247, Leu289–His309, Leu321–Ser341, and Phe348–Pro368.

Belongs to the cytochrome b family. In terms of assembly, the cytochrome bc1 complex contains 11 subunits: 3 respiratory subunits (MT-CYB, CYC1 and UQCRFS1), 2 core proteins (UQCRC1 and UQCRC2) and 6 low-molecular weight proteins (UQCRH/QCR6, UQCRB/QCR7, UQCRQ/QCR8, UQCR10/QCR9, UQCR11/QCR10 and a cleavage product of UQCRFS1). This cytochrome bc1 complex then forms a dimer. The cofactor is heme b.

Its subcellular location is the mitochondrion inner membrane. Its function is as follows. Component of the ubiquinol-cytochrome c reductase complex (complex III or cytochrome b-c1 complex) that is part of the mitochondrial respiratory chain. The b-c1 complex mediates electron transfer from ubiquinol to cytochrome c. Contributes to the generation of a proton gradient across the mitochondrial membrane that is then used for ATP synthesis. This Daption capense (Cape petrel) protein is Cytochrome b (MT-CYB).